A 421-amino-acid chain; its full sequence is Glucan 1,3-beta-glucosidase (421 aa).

The signal sequence occupies residues 1 to 15 (MKLTKLVALAGAALA). The active-site Proton donor is the glutamate 213. 2 disulfide bridges follow: cysteine 296-cysteine 419 and cysteine 321-cysteine 347. The active-site Nucleophile is the glutamate 313.

The protein belongs to the glycosyl hydrolase 5 (cellulase A) family.

The protein resides in the secreted. The enzyme catalyses Successive hydrolysis of beta-D-glucose units from the non-reducing ends of (1-&gt;3)-beta-D-glucans, releasing alpha-glucose.. In Yarrowia lipolytica (strain CLIB 122 / E 150) (Yeast), this protein is Glucan 1,3-beta-glucosidase (EXG1).